Reading from the N-terminus, the 206-residue chain is FMN-dependent NADH:quinone oxidoreductase (206 aa).

FMN-binding positions include Ser-10 and 15 to 17; that span reads SVS.

This sequence belongs to the azoreductase type 1 family. Homodimer. FMN is required as a cofactor.

It catalyses the reaction 2 a quinone + NADH + H(+) = 2 a 1,4-benzosemiquinone + NAD(+). The enzyme catalyses N,N-dimethyl-1,4-phenylenediamine + anthranilate + 2 NAD(+) = 2-(4-dimethylaminophenyl)diazenylbenzoate + 2 NADH + 2 H(+). Its function is as follows. Quinone reductase that provides resistance to thiol-specific stress caused by electrophilic quinones. Also exhibits azoreductase activity. Catalyzes the reductive cleavage of the azo bond in aromatic azo compounds to the corresponding amines. The protein is FMN-dependent NADH:quinone oxidoreductase of Acidobacterium capsulatum (strain ATCC 51196 / DSM 11244 / BCRC 80197 / JCM 7670 / NBRC 15755 / NCIMB 13165 / 161).